We begin with the raw amino-acid sequence, 256 residues long: Cell division protein DivIB (256 aa).

The Cytoplasmic portion of the chain corresponds to 1–23; sequence MSKDLISTDEYIKIKKKRKRIKK. A helical transmembrane segment spans residues 24–44; sequence IVVLFIFLISILVTLCLKIPY. The POTRA domain occupies 45–113; sequence FNIESIEIKG…NKLEIYVKER (69 aa). Topologically, residues 45-256 are extracellular; sequence FNIESIEIKG…EGNPVFYIEK (212 aa).

This sequence belongs to the FtsQ/DivIB family. DivIB subfamily.

It is found in the cell membrane. In terms of biological role, cell division protein that may be involved in stabilizing or promoting the assembly of the division complex. This chain is Cell division protein DivIB, found in Clostridium botulinum (strain Loch Maree / Type A3).